The following is a 30-amino-acid chain: Alpha-defensin PhD-4 (30 aa).

3 disulfides stabilise this stretch: cysteine 2–cysteine 30, cysteine 4–cysteine 19, and cysteine 9–cysteine 29.

The protein resides in the secreted. In low salt conditions, has antibacterial activity against the Gram-negative bacterium E.coli ML35p (MIC=2.4 uM), the Gram-positive bacteria L.monocytogenes EGD (MIC=2.2 uM) and methicillin-resistant S.aureus ATCC 33591 (MIC=3.5 uM), and the fungus C.albicans 820 (MIC=3.9 uM). At high physiological salt concentrations the antimicrobial activity decreases significantly: E.coli ML35p (MIC=7.1 uM), L.monocytogenes EGD (MIC=1.8 uM), S.aureus ATCC 33591 (MIC=&gt;50 uM), and C.albicans 820 (MIC=&gt;50 uM). The chain is Alpha-defensin PhD-4 from Papio hamadryas (Hamadryas baboon).